Here is a 317-residue protein sequence, read N- to C-terminus: MGVAGSGVLYFLFNNVPSPRFWLKKTQLIGTENPEGITGYECPYEYLRKSYGKHHWAAFVDKLSPNLQNEDPAKYRMVLETMDVIHLCLMMVDDISDGSEYRKGKPAAHKIYGAPETANRAYYRVTQILAQTATEFPRLSPWLMTDLRDILEGQDMSLVWRRDGVNGFPGTASERTAAYKRMVLLKTGGLFRLLGHLTLENNSMDEAFSTLGWHSQLQNDCKNVYSSEYAKMKGVVAEDLLNREMTYPIVLALDASGGHWVEAALKSPSRRNVGNALKIIQCDYVRDVCMAELARSGAPVKEWLKLWKREEKLDLKA.

2 residues coordinate substrate: K53 and H86. 2 residues coordinate Mg(2+): D93 and D97. R102, K186, T187, Q216, N223, and K233 together coordinate substrate.

This sequence belongs to the FPP/GGPP synthase family.

It participates in secondary metabolite biosynthesis. Prenyl transferase; part of the gene cluster that mediates the biosynthesis of paxalline, a mycotoxin that acts as an inhibitor of mammalian maxi-K channels. PaxG, the geranylgeranyl diphosphate (GGPP) synthase is proposed to catalyze the first step in paxilline biosynthesis. Condensation of indole-3-glycerol phosphate with GGPP by paxC then forms 3-geranylgeranylindole (3-GGI), followed by epoxidation and cyclization of this intermediate (by paxM and paxB) to form paspaline. Paspaline is subsequently converted to 13-desoxypaxilline by paxP, the latter being then converted to paxilline by paxQ. Finally paxilline can be mono- and di-prenylated by paxD. This is Prenyl transferase paxC from Penicillium paxilli.